A 180-amino-acid chain; its full sequence is LQTGRLFPETLKLIDETENQYDIRISRYEPEQADIDAYAEKYGLNGFYESVEARHACCGVRKLKPLARALSGATIWVTGLRRGQSANRADTPFAEYDPERNLIKVNPLADWDIDVIRAYVADNGVPVNPLHQRGYPSIGCEPCTRAIKPGEPERAGRWWWENDEKRECGLHVHEEAAAAQ.

Cys57, Cys58, Cys140, and Cys143 together coordinate [4Fe-4S] cluster. The active-site Nucleophile; cysteine thiosulfonate intermediate is Cys168.

This sequence belongs to the PAPS reductase family. CysH subfamily. The cofactor is [4Fe-4S] cluster.

It is found in the cytoplasm. The catalysed reaction is [thioredoxin]-disulfide + sulfite + AMP + 2 H(+) = adenosine 5'-phosphosulfate + [thioredoxin]-dithiol. The protein operates within sulfur metabolism; hydrogen sulfide biosynthesis; sulfite from sulfate. Functionally, catalyzes the formation of sulfite from adenosine 5'-phosphosulfate (APS) using thioredoxin as an electron donor. In Rhizobium tropici, this protein is Adenosine 5'-phosphosulfate reductase.